The chain runs to 428 residues: Cholecystokinin receptor type A (428 aa).

Residues 1 to 41 lie on the Extracellular side of the membrane; the sequence is MDVVDSLLVNGSNITPPCELGLENETLFCLDQPRPSKEWQP. 2 N-linked (GlcNAc...) asparagine glycosylation sites follow: N10 and N24. Cysteines 18 and 29 form a disulfide. A helical transmembrane segment spans residues 42 to 67; the sequence is AVQILLYSLIFLLSVLGNTLVITVLI. Topologically, residues 68 to 77 are cytoplasmic; sequence RNKRMRTVTN. The helical transmembrane segment at 78 to 104 threads the bilayer; sequence IFLLSLAVSDLMLCLFCMPFNLIPNLL. The Extracellular portion of the chain corresponds to 105 to 115; it reads KDFIFGSAVCK. A disulfide bridge connects residues C114 and C196. A helical transmembrane segment spans residues 116–137; the sequence is TTTYFMGTSVSVSTFNLVAISL. Topologically, residues 138 to 157 are cytoplasmic; the sequence is ERYGAICKPLQSRVWQTKSH. A helical transmembrane segment spans residues 158–178; sequence ALKVIAATWCLSFTIMTPYPI. Topologically, residues 179–210 are extracellular; the sequence is YSNLVPFTKNNNQTANMCRFLLPNDVMQQSWH. N190 carries an N-linked (GlcNAc...) asparagine glycan. Residues 211–234 traverse the membrane as a helical segment; it reads TFLLLILFLIPGIVMMVAYGLISL. Residues 235–313 are Cytoplasmic-facing; it reads ELYQGIKFEA…NLMAKKRVIR (79 aa). The tract at residues 248–272 is disordered; sequence KSAKERKPSTTSSGKYEDSDGCYLQ. A helical membrane pass occupies residues 314–334; it reads MLIVIVVLFFLCWMPIFSANA. Residues 335–349 lie on the Extracellular side of the membrane; the sequence is WRAYDTASAERRLSG. Residues 350–373 form a helical membrane-spanning segment; sequence TPISFILLLSYTSSCVNPIIYCFM. At 374 to 428 the chain is on the cytoplasmic side; that stretch reads NKRFRLGFMATFPCCPNPGPPGARGEVGEEEEGGTTGASLSRFSYSHMSASVPPQ. A lipid anchor (S-palmitoyl cysteine) is attached at C387. Residues 394–428 are disordered; it reads PGARGEVGEEEEGGTTGASLSRFSYSHMSASVPPQ. The span at 411 to 422 shows a compositional bias: polar residues; it reads ASLSRFSYSHMS.

The protein belongs to the G-protein coupled receptor 1 family.

The protein resides in the cell membrane. Its function is as follows. Receptor for cholecystokinin. Mediates pancreatic growth and enzyme secretion, smooth muscle contraction of the gall bladder and stomach. Has a 1000-fold higher affinity for CCK rather than for gastrin. It modulates feeding and dopamine-induced behavior in the central and peripheral nervous system. This receptor mediates its action by association with G proteins that activate a phosphatidylinositol-calcium second messenger system. This chain is Cholecystokinin receptor type A (CCKAR), found in Homo sapiens (Human).